Reading from the N-terminus, the 230-residue chain is Ribonuclease 3 (230 aa).

One can recognise an RNase III domain in the interval 5-134; it reads NDTISKVINY…LIGAIYIDGG (130 aa). Residue Glu-47 coordinates Mg(2+). Asp-51 is an active-site residue. 2 residues coordinate Mg(2+): Asn-120 and Glu-123. Residue Glu-123 is part of the active site. Residues 159–228 form the DRBM domain; it reads DPKTSLQEWT…AELILEKIKK (70 aa).

This sequence belongs to the ribonuclease III family. As to quaternary structure, homodimer. Mg(2+) is required as a cofactor.

It localises to the cytoplasm. It catalyses the reaction Endonucleolytic cleavage to 5'-phosphomonoester.. Digests double-stranded RNA. Involved in the processing of primary rRNA transcript to yield the immediate precursors to the large and small rRNAs (23S and 16S). Processes some mRNAs, and tRNAs when they are encoded in the rRNA operon. Processes pre-crRNA and tracrRNA of type II CRISPR loci if present in the organism. The polypeptide is Ribonuclease 3 (Wolbachia pipientis subsp. Culex pipiens (strain wPip)).